The sequence spans 1029 residues: Protein translocase subunit SecA (1029 aa).

ATP-binding positions include glutamine 143, 161–165, and aspartate 661; that span reads GEGKT. Residues 953–1029 are disordered; that stretch reads EQEQKKSQVQ…GKKYKNCCGK (77 aa). 2 stretches are compositionally biased toward basic and acidic residues: residues 966-975 and 984-996; these read LVARHEKAET and PEGR…ENGK. The Zn(2+) site is built by cysteine 1015, cysteine 1017, cysteine 1026, and cysteine 1027.

It belongs to the SecA family. In terms of assembly, monomer and homodimer. Part of the essential Sec protein translocation apparatus which comprises SecA, SecYEG and auxiliary proteins SecDF. Other proteins may also be involved. Requires Zn(2+) as cofactor.

It localises to the cell inner membrane. It is found in the cytoplasm. It carries out the reaction ATP + H2O + cellular proteinSide 1 = ADP + phosphate + cellular proteinSide 2.. Part of the Sec protein translocase complex. Interacts with the SecYEG preprotein conducting channel. Has a central role in coupling the hydrolysis of ATP to the transfer of proteins into and across the cell membrane, serving as an ATP-driven molecular motor driving the stepwise translocation of polypeptide chains across the membrane. This Chlorobium phaeobacteroides (strain BS1) protein is Protein translocase subunit SecA.